Here is a 156-residue protein sequence, read N- to C-terminus: Ribosomal RNA large subunit methyltransferase H (156 aa).

Residues leucine 73, glycine 104, and 123 to 128 (LSSLTL) contribute to the S-adenosyl-L-methionine site.

It belongs to the RNA methyltransferase RlmH family. Homodimer.

The protein localises to the cytoplasm. It catalyses the reaction pseudouridine(1915) in 23S rRNA + S-adenosyl-L-methionine = N(3)-methylpseudouridine(1915) in 23S rRNA + S-adenosyl-L-homocysteine + H(+). Its function is as follows. Specifically methylates the pseudouridine at position 1915 (m3Psi1915) in 23S rRNA. This Neisseria gonorrhoeae (strain NCCP11945) protein is Ribosomal RNA large subunit methyltransferase H.